The sequence spans 195 residues: HTH-type transcriptional regulator BetI (195 aa).

The region spanning 8-68 (PIRRRQLIDA…ATMRDITSQL (61 aa)) is the HTH tetR-type domain. Positions 31-50 (TIAQIARRAGVSTGIISHYF) form a DNA-binding region, H-T-H motif.

The protein operates within amine and polyamine biosynthesis; betaine biosynthesis via choline pathway [regulation]. Its function is as follows. Repressor involved in the biosynthesis of the osmoprotectant glycine betaine. It represses transcription of the choline transporter BetT and the genes of BetAB involved in the synthesis of glycine betaine. The sequence is that of HTH-type transcriptional regulator BetI from Klebsiella pneumoniae (strain 342).